We begin with the raw amino-acid sequence, 123 residues long: Small ribosomal subunit protein bS6 (123 aa).

The disordered stretch occupies residues 102–123 (MLKQKEERAPRREAEAKEFAAE). Over residues 104 to 123 (KQKEERAPRREAEAKEFAAE) the composition is skewed to basic and acidic residues.

This sequence belongs to the bacterial ribosomal protein bS6 family.

Its function is as follows. Binds together with bS18 to 16S ribosomal RNA. The sequence is that of Small ribosomal subunit protein bS6 from Vibrio vulnificus (strain CMCP6).